The sequence spans 410 residues: Lipid droplet-regulating VLDL assembly factor AUP1 (410 aa).

N-acetylmethionine is present on Met-1. Residues 1-20 (MELPSGPGPERLFDSHRLPG) are Cytoplasmic-facing. Residue Ser-5 is modified to Phosphoserine. An intramembrane segment occupies 21 to 41 (DCFLLLVLLLYAPVGFCLLVL). The Cytoplasmic segment spans residues 42–410 (RLFLGIHVFL…FTERRAQEAD (369 aa)). A disordered region spans residues 255–295 (TGTRLTPADKAEHMKRQRHPRLRPQSAQSSFPPSPGPSPDV). Residues Ser-288 and Ser-292 each carry the phosphoserine modification. A CUE domain is found at 296–338 (QLATLAQRVKEVLPHVPLGVIQRDLAKTGCVDLTITNLLEGAV). The segment at 350 to 369 (QSLPTASASKFPSSGPVTPQ) is disordered. The residue at position 363 (Ser-363) is a Phosphoserine. Thr-367 is subject to Phosphothreonine.

It belongs to the AUP1 family. In terms of assembly, identified in a complex that contains SEL1L, OS9, FAF2/UBXD8, UBE2J1/UBC6E and AUP1. Interacts with the cytoplasmic tail of ITGA2B, ITGA1, ITGA2, ITGA5, ITGAV and ITGAM. Interacts (via C-terminus) with ubiquitin-conjugating enzyme UBE2G2; the interaction recruits UBE2G2 to lipid droplets. Interacts with ubiquitin ligases AMFR/gp78 and RNF139/TRC8; this promotes interaction of UBE2G2 with AMFR and RNF139. Interacts with apolipoprotein APOB. As to quaternary structure, (Microbial infection) Interacts with Dengue virus NS4A; the interaction occurs in the presence of Dengue virus NS4B and induces lipophagy which facilitates production of virus progeny. In terms of processing, monoubiquitinated and diubiquitinated. (Microbial infection) Not ubiquitinated following Dengue virus infection. As to expression, detected in blood platelets and leukocytes (at protein level). Ubiquitous. Highly expressed in placenta, liver, kidney, skeletal muscle, heart and brain.

Its subcellular location is the endoplasmic reticulum membrane. It localises to the lipid droplet. It is found in the cytoplasmic vesicle. The protein localises to the autophagosome. In terms of biological role, plays a role in the translocation of terminally misfolded proteins from the endoplasmic reticulum lumen to the cytoplasm and their degradation by the proteasome. Plays a role in lipid droplet formation. Induces lipid droplet clustering. Recruits ubiquitin-conjugating enzyme UBE2G2 to lipid droplets which facilitates its interaction with ubiquitin ligases AMFR/gp78 and RNF139/TRC8, leading to sterol-induced ubiquitination of HMGCR and its subsequent proteasomal degradation. Also required for the degradation of INSIG1, SREBF1 and SREBF2. Plays a role in regulating assembly and secretion of very low density lipoprotein particles and stability of apolipoprotein APOB. (Microbial infection) Following Dengue virus infection, required for induction of lipophagy which facilitates production of virus progeny particles. The chain is Lipid droplet-regulating VLDL assembly factor AUP1 from Homo sapiens (Human).